Consider the following 490-residue polypeptide: WD repeat-containing protein JIP5 (490 aa).

WD repeat units follow at residues 23–64 (KYND…ERMQ), 70–112 (QKKK…GSCR), 118–155 (PIESSVGKHLFTVGKDHVVKKANTETGKVLTKTDISKD), 157–196 (SSKDAVTKLCHSTTHPFLLSGTENGHVLVYDSNDLSNKFK), 242–284 (DQED…LMDQ), 286–327 (SRIK…HRVN), and 340–377 (GTADEVGFLDIDYEYRLLTAGMDSMKLWSAEGDDEEEE). Residues 368 to 490 (SAEGDDEEEE…SHGIRRFDGL (123 aa)) form a disordered region. 2 stretches are compositionally biased toward acidic residues: residues 370 to 406 (EGDDEEEEESEGEESEESEESDEESDESSGEESEGDD) and 413 to 437 (EESDSNDEDEVESSDDEKEKEEEST). The span at 438–448 (ETDHKNIEAES) shows a compositional bias: basic and acidic residues. The segment covering 450–461 (KQANKRQASQPK) has biased composition (polar residues). A compositionally biased stretch (basic residues) spans 469–484 (KQKLKQTSKLAHSHGI).

It belongs to the WD repeat WDR55 family.

It localises to the nucleus. Its subcellular location is the nucleolus. The protein is WD repeat-containing protein JIP5 (JIP5) of Meyerozyma guilliermondii (strain ATCC 6260 / CBS 566 / DSM 6381 / JCM 1539 / NBRC 10279 / NRRL Y-324) (Yeast).